Consider the following 158-residue polypeptide: Heavy metal-associated isoprenylated plant protein 23 (158 aa).

The HMA domain occupies 31–94; that stretch reads FQTVELKVRM…KAKATGKKAE (64 aa). A metal cation-binding residues include Cys-42 and Cys-45. Cysteine methyl ester is present on Cys-155. Residue Cys-155 is the site of S-farnesyl cysteine attachment. The propeptide at 156–158 is removed in mature form; the sequence is SIM.

Belongs to the HIPP family. As to quaternary structure, interacts with ZHD11/HB29.

Its function is as follows. Heavy-metal-binding protein. This is Heavy metal-associated isoprenylated plant protein 23 from Arabidopsis thaliana (Mouse-ear cress).